Here is a 298-residue protein sequence, read N- to C-terminus: Probable GTP 3',8-cyclase (298 aa).

Residues lysine 4–glutamate 230 enclose the Radical SAM core domain. Arginine 13 serves as a coordination point for GTP. Cysteine 20 and cysteine 24 together coordinate [4Fe-4S] cluster. Tyrosine 26 contacts S-adenosyl-L-methionine. [4Fe-4S] cluster is bound at residue cysteine 27. Lysine 61 serves as a coordination point for GTP. Glycine 65 contacts S-adenosyl-L-methionine. Threonine 91 is a binding site for GTP. Position 115 (serine 115) interacts with S-adenosyl-L-methionine. Lysine 152 contributes to the GTP binding site. Positions 243 and 246 each coordinate [4Fe-4S] cluster. Residue arginine 248 to arginine 250 participates in GTP binding. Cysteine 260 provides a ligand contact to [4Fe-4S] cluster.

It belongs to the radical SAM superfamily. MoaA family. [4Fe-4S] cluster serves as cofactor.

The catalysed reaction is GTP + AH2 + S-adenosyl-L-methionine = (8S)-3',8-cyclo-7,8-dihydroguanosine 5'-triphosphate + 5'-deoxyadenosine + L-methionine + A + H(+). It functions in the pathway cofactor biosynthesis; molybdopterin biosynthesis. Functionally, catalyzes the cyclization of GTP to (8S)-3',8-cyclo-7,8-dihydroguanosine 5'-triphosphate. This is Probable GTP 3',8-cyclase from Methanocaldococcus jannaschii (strain ATCC 43067 / DSM 2661 / JAL-1 / JCM 10045 / NBRC 100440) (Methanococcus jannaschii).